The following is a 237-amino-acid chain: Ribosomal RNA small subunit methyltransferase G (237 aa).

Residues Gly78, Phe83, 129 to 130, and Arg148 contribute to the S-adenosyl-L-methionine site; that span reads AE.

Belongs to the methyltransferase superfamily. RNA methyltransferase RsmG family.

It localises to the cytoplasm. Specifically methylates the N7 position of a guanine in 16S rRNA. This chain is Ribosomal RNA small subunit methyltransferase G, found in Streptococcus pyogenes serotype M4 (strain MGAS10750).